Here is a 420-residue protein sequence, read N- to C-terminus: D-tagatose-1,6-bisphosphate aldolase subunit GatZ (420 aa).

It belongs to the GatZ/KbaZ family. GatZ subfamily. As to quaternary structure, forms a complex with GatY.

It participates in carbohydrate metabolism; D-tagatose 6-phosphate degradation; D-glyceraldehyde 3-phosphate and glycerone phosphate from D-tagatose 6-phosphate: step 2/2. Functionally, component of the tagatose-1,6-bisphosphate aldolase GatYZ that is required for full activity and stability of the Y subunit. Could have a chaperone-like function for the proper and stable folding of GatY. When expressed alone, GatZ does not show any aldolase activity. Is involved in the catabolism of galactitol. The protein is D-tagatose-1,6-bisphosphate aldolase subunit GatZ of Escherichia coli O7:K1 (strain IAI39 / ExPEC).